The chain runs to 539 residues: Membrane protein insertase YidC (539 aa).

5 consecutive transmembrane segments (helical) span residues 6–26, 341–361, 416–436, 454–474, and 495–515; these read TLLV…WQVA, SVIQ…TFIV, LGGC…YWAL, LSAQ…MFLI, and PVMF…YWLV.

It belongs to the OXA1/ALB3/YidC family. Type 1 subfamily. As to quaternary structure, interacts with the Sec translocase complex via SecD. Specifically interacts with transmembrane segments of nascent integral membrane proteins during membrane integration.

It is found in the cell inner membrane. Its function is as follows. Required for the insertion and/or proper folding and/or complex formation of integral membrane proteins into the membrane. Involved in integration of membrane proteins that insert both dependently and independently of the Sec translocase complex, as well as at least some lipoproteins. Aids folding of multispanning membrane proteins. The sequence is that of Membrane protein insertase YidC from Vibrio vulnificus (strain YJ016).